A 377-amino-acid polypeptide reads, in one-letter code: Succinyl-diaminopimelate desuccinylase (377 aa).

His68 provides a ligand contact to Zn(2+). The active site involves Asp70. Asp101 contributes to the Zn(2+) binding site. Residue Glu135 is the Proton acceptor of the active site. Glu136, Glu164, and His350 together coordinate Zn(2+).

This sequence belongs to the peptidase M20A family. DapE subfamily. Homodimer. The cofactor is Zn(2+). Co(2+) serves as cofactor.

The enzyme catalyses N-succinyl-(2S,6S)-2,6-diaminopimelate + H2O = (2S,6S)-2,6-diaminopimelate + succinate. Its pathway is amino-acid biosynthesis; L-lysine biosynthesis via DAP pathway; LL-2,6-diaminopimelate from (S)-tetrahydrodipicolinate (succinylase route): step 3/3. Its function is as follows. Catalyzes the hydrolysis of N-succinyl-L,L-diaminopimelic acid (SDAP), forming succinate and LL-2,6-diaminopimelate (DAP), an intermediate involved in the bacterial biosynthesis of lysine and meso-diaminopimelic acid, an essential component of bacterial cell walls. The chain is Succinyl-diaminopimelate desuccinylase from Acinetobacter baylyi (strain ATCC 33305 / BD413 / ADP1).